We begin with the raw amino-acid sequence, 134 residues long: Profilin-3 (134 aa).

The cysteines at positions 13 and 118 are disulfide-linked. The Involved in PIP2 interaction signature appears at 84 to 100 (AVIRGKKGSGGITIKKT). Threonine 114 carries the phosphothreonine modification.

The protein belongs to the profilin family. As to quaternary structure, occurs in many kinds of cells as a complex with monomeric actin in a 1:1 ratio. In terms of processing, phosphorylated by MAP kinases.

It localises to the cytoplasm. It is found in the cytoskeleton. Functionally, binds to actin and affects the structure of the cytoskeleton. At high concentrations, profilin prevents the polymerization of actin, whereas it enhances it at low concentrations. The sequence is that of Profilin-3 from Olea europaea (Common olive).